A 376-amino-acid chain; its full sequence is Germination-specific cysteine protease 1 (376 aa).

An N-terminal signal peptide occupies residues 1-22 (MAPSTKVLSLLLLYVVVSLASG). Residues 23-144 (DESIINDHLQ…KYSAAVNGKE (122 aa)) constitute a propeptide, activation peptide. A glycan (N-linked (GlcNAc...) asparagine) is linked at Asn-93. Cystine bridges form between Cys-166–Cys-208, Cys-200–Cys-241, and Cys-299–Cys-351. The active site involves Cys-169. Residues His-305 and Asn-325 contribute to the active site.

The protein belongs to the peptidase C1 family.

Its function is as follows. Probable thiol protease. The chain is Germination-specific cysteine protease 1 from Arabidopsis thaliana (Mouse-ear cress).